The chain runs to 419 residues: L-rhamnose isomerase (419 aa).

The Mn(2+) site is built by His262, Asp294, and Asp296.

Belongs to the rhamnose isomerase family. In terms of assembly, homotetramer. It depends on Mn(2+) as a cofactor.

It is found in the cytoplasm. The enzyme catalyses L-rhamnopyranose = L-rhamnulose. It functions in the pathway carbohydrate degradation; L-rhamnose degradation; glycerone phosphate from L-rhamnose: step 1/3. Its function is as follows. Catalyzes the interconversion of L-rhamnose and L-rhamnulose. The protein is L-rhamnose isomerase of Salmonella typhimurium (strain LT2 / SGSC1412 / ATCC 700720).